A 372-amino-acid polypeptide reads, in one-letter code: MFRIAKNLVRTFEQSVQDTLALSQDSSNLDAFFQSIPPNLLSAQLESPVDAVSEGVKHTNVNETLSGLRIVWVDEMQFQLQSFFDYIVGFNDDPVPVVSNQHGFSYPDYRRITSIFNEHCGRTLKVNIWSAKGGTFRDEYISIISKESDDLDDVSLNHDERRPSSGEAHQFQALGFKVQWTPLIASTFTYHILNVNIPDGPAQSAGLIPDEDYIIGCQDGLLATGGETLLQDIVRSRANYDLVLYVYNKVSDCVRPITVHIGPDGRLGCNVGYGFLHRIPTVKHCPQQAQQQGQDDNPVPVPVPVESETAFVPSAFTAPPVPTKKKSKNKKGTQPLAMDDYFNEGRDKSSTAAKSAESDILAPPPQKQSSSD.

Methionine 1 is subject to N-acetylmethionine. PDZ GRASP-type domains lie at 66-183 (SGLR…WTPL) and 188-276 (FTYH…YGFL). The GRASP stretch occupies residues 66 to 292 (SGLRIVWVDE…KHCPQQAQQQ (227 aa)). Residue serine 155 is modified to Phosphoserine. The segment at 312 to 372 (VPSAFTAPPV…PPPQKQSSSD (61 aa)) is disordered.

Homodimer. Interacts with BUG1 (via C-terminus), probably forming a heterooligomer consisting of a GRH1 dimer and a BUG1 dimer. Interacts with COPII coat components SEC23, SEC24, SFB2 and SFB3. Post-translationally, N-terminal acetylation; by N-terminal acetyltransferase NatC.

The protein localises to the cytoplasm. It is found in the golgi apparatus. The protein resides in the cis-Golgi network membrane. Functionally, involved in the spindle assembly checkpoint. Involved in ER to Golgi vesicle-mediated transport by either facilitating USO1-dependent and -independent tethering or increasing target accuracy of fusion events of COPII-coated vesicles. This Saccharomyces cerevisiae (strain ATCC 204508 / S288c) (Baker's yeast) protein is GRASP65 homolog protein 1 (GRH1).